Here is a 435-residue protein sequence, read N- to C-terminus: C4-dicarboxylate transport protein (435 aa).

Helical transmembrane passes span 4 to 24, 44 to 64, 76 to 96, 142 to 162, 184 to 204, 222 to 242, 289 to 309, 326 to 346, and 352 to 372; these read SLFK…ILLG, LIKM…IAGM, VALL…LIIV, IGAF…LFGF, VIFG…FGAM, LIIC…GTIA, VVGL…SIYL, IFHQ…VAGV, and IVLA…LALI.

Belongs to the dicarboxylate/amino acid:cation symporter (DAACS) (TC 2.A.23) family.

Its subcellular location is the cell inner membrane. Responsible for the transport of dicarboxylates such as succinate, fumarate, and malate from the periplasm across the membrane. In Salmonella paratyphi A (strain ATCC 9150 / SARB42), this protein is C4-dicarboxylate transport protein.